We begin with the raw amino-acid sequence, 302 residues long: Large ribosomal subunit protein uL3c (302 aa).

A chloroplast-targeting transit peptide spans 1 to 36 (MFQSSRLVALGLCAALVLVGGSIILSGLSPNLSSPM). A disordered region spans residues 208-239 (FQGSIRRWGMKRGPMSHGSKSHRQHGSIGCSA).

This sequence belongs to the universal ribosomal protein uL3 family. Part of the 50S ribosomal subunit.

It localises to the plastid. The protein localises to the chloroplast. Its function is as follows. One of the primary rRNA binding proteins, it binds directly near the 3'-end of the 23S rRNA, where it nucleates assembly of the 50S subunit. This Bigelowiella natans (Pedinomonas minutissima) protein is Large ribosomal subunit protein uL3c (RPL3).